The sequence spans 312 residues: DNA-directed RNA polymerase subunit alpha (312 aa).

Positions 1 to 226 (MIEFEKPKIT…DHLNLFVDLS (226 aa)) are alpha N-terminal domain (alpha-NTD). The segment at 243–312 (TERVLDKIIE…ELGLSLKKRK (70 aa)) is alpha C-terminal domain (alpha-CTD).

Belongs to the RNA polymerase alpha chain family. In terms of assembly, homodimer. The RNAP catalytic core consists of 2 alpha, 1 beta, 1 beta' and 1 omega subunit. When a sigma factor is associated with the core the holoenzyme is formed, which can initiate transcription.

The catalysed reaction is RNA(n) + a ribonucleoside 5'-triphosphate = RNA(n+1) + diphosphate. Its function is as follows. DNA-dependent RNA polymerase catalyzes the transcription of DNA into RNA using the four ribonucleoside triphosphates as substrates. This chain is DNA-directed RNA polymerase subunit alpha, found in Lactococcus lactis subsp. lactis (strain IL1403) (Streptococcus lactis).